The following is a 72-amino-acid chain: Translation initiation factor IF-1 (72 aa).

One can recognise an S1-like domain in the interval 1 to 72 (MAKEDNIEMQ…SKGRIVFRSR (72 aa)).

It belongs to the IF-1 family. In terms of assembly, component of the 30S ribosomal translation pre-initiation complex which assembles on the 30S ribosome in the order IF-2 and IF-3, IF-1 and N-formylmethionyl-tRNA(fMet); mRNA recruitment can occur at any time during PIC assembly.

It is found in the cytoplasm. Its function is as follows. One of the essential components for the initiation of protein synthesis. Stabilizes the binding of IF-2 and IF-3 on the 30S subunit to which N-formylmethionyl-tRNA(fMet) subsequently binds. Helps modulate mRNA selection, yielding the 30S pre-initiation complex (PIC). Upon addition of the 50S ribosomal subunit IF-1, IF-2 and IF-3 are released leaving the mature 70S translation initiation complex. The sequence is that of Translation initiation factor IF-1 from Klebsiella pneumoniae subsp. pneumoniae (strain ATCC 700721 / MGH 78578).